Reading from the N-terminus, the 504-residue chain is Facilitated trehalose transporter Tret1 (504 aa).

Residues 1–39 (MELNNKEDSPRHTVPFVRQITEDGKAKLEIYRPTTNPIY) lie on the Cytoplasmic side of the membrane. A helical membrane pass occupies residues 40 to 60 (IYTQILAAIAVSMGSMVVGFA). The Extracellular portion of the chain corresponds to 61–87 (SAYTSPALVSMQNTTITSFKVTEQEAS). Asn73 is a glycosylation site (N-linked (GlcNAc...) asparagine). The chain crosses the membrane as a helical span at residues 88-108 (WVGGIMPLAGLAGGIAGGPFI). Residues 109-120 (EYLGRKNTILAT) are Cytoplasmic-facing. A helical transmembrane segment spans residues 121–141 (AVPFIVAWLLIAFANSIWMVL). Over 142–145 (AGRA) the chain is Extracellular. Residues 146–166 (LSGFCVGIASLSLPVYLGETV) form a helical membrane-spanning segment. The Cytoplasmic segment spans residues 167–171 (QPEVR). The helical transmembrane segment at 172–192 (GTLGLLPTAFGNIGILICFVA) threads the bilayer. Over 193–199 (GKYVNWS) the chain is Extracellular. Residue Asn197 is glycosylated (N-linked (GlcNAc...) asparagine). The helical transmembrane segment at 200–220 (GLAFIGSILPIPFMVLTLLIP) threads the bilayer. At 221–283 (ETPRWFVTRG…DLMKRSNLKP (63 aa)) the chain is on the cytoplasmic side. The chain crosses the membrane as a helical span at residues 284–304 (LLIALGLMFFQQLSGINAVIF). At 305–320 (YTVSIFKDAGSTIDEN) the chain is on the extracellular side. The chain crosses the membrane as a helical span at residues 321 to 341 (LCTIIVGVVNFGATFFATVLI). The Cytoplasmic segment spans residues 342–347 (DRLGRK). Residues 348–368 (ILLYISEVAMVITLLTLGTFF) form a helical membrane-spanning segment. Topologically, residues 369 to 387 (YYKNSGNDVSNIGWLPLAS) are extracellular. A helical membrane pass occupies residues 388-408 (FVIYVIGFSSGVGPIPWLMLG). At 409–424 (EILPGKIRGSAASVAT) the chain is on the cytoplasmic side. The helical transmembrane segment at 425–445 (GFNWTCTFIVTKTFADIVAAI) threads the bilayer. Residues 446 to 448 (GNH) are Extracellular-facing. A helical membrane pass occupies residues 449-469 (GAFWFFGVICLIGLFFVIFFV). Topologically, residues 470–504 (PETQGKSLEEIERKMMGRVRRMSSVANMKPLSFNM) are cytoplasmic.

This sequence belongs to the major facilitator superfamily. Sugar transporter (TC 2.A.1.1) family. Trehalose transporter subfamily. Highest expression in the fat body. Not expressed in other tissues including the midgut, muscle, and integuments after 24 hours of dehydration.

The protein localises to the cell membrane. High-capacity facilitative transporter for trehalose, required to induce anhydrobiosis. Anhydrobiotic larvae can survive almost complete dehydration. Does not transport maltose, sucrose or lactose. Mediates the bidirectional transfer of trehalose. Responsible for the transport of trehalose synthesized in the fat body and the incorporation of trehalose into other tissues that require a carbon source, thereby regulating trehalose levels in the hemolymph. The polypeptide is Facilitated trehalose transporter Tret1 (Polypedilum vanderplanki (Sleeping chironomid midge)).